The primary structure comprises 73 residues: Sec-independent protein translocase protein TatA (73 aa).

Residues 1–21 (MGSFSIWHWLIVLVIVMLVFG) traverse the membrane as a helical segment. The disordered stretch occupies residues 50–73 (KEQIQQSSATAEKTVDVQAKDVNK). Basic and acidic residues predominate over residues 62-73 (KTVDVQAKDVNK).

It belongs to the TatA/E family. In terms of assembly, the Tat system comprises two distinct complexes: a TatABC complex, containing multiple copies of TatA, TatB and TatC subunits, and a separate TatA complex, containing only TatA subunits. Substrates initially bind to the TatABC complex, which probably triggers association of the separate TatA complex to form the active translocon.

The protein resides in the cell inner membrane. Its function is as follows. Part of the twin-arginine translocation (Tat) system that transports large folded proteins containing a characteristic twin-arginine motif in their signal peptide across membranes. TatA could form the protein-conducting channel of the Tat system. The polypeptide is Sec-independent protein translocase protein TatA (Polynucleobacter necessarius subsp. necessarius (strain STIR1)).